A 235-amino-acid polypeptide reads, in one-letter code: Clathrin light chain A (235 aa).

Residues 1-32 (MAELDPFGAPAGAPGGPALGNGVAGAGEEDPA) are disordered. Residues 13–25 (APGGPALGNGVAG) are compositionally biased toward gly residues. Positions 99–161 (VDRLQSEPES…QLQKTKANNR (63 aa)) are involved in binding clathrin heavy chain. Residues Ser104 and Ser193 each carry the phosphoserine modification. Position 210 is an N6-acetyllysine (Lys210). A Phosphoserine modification is found at Ser223. Position 229 is an N6-acetyllysine (Lys229).

Belongs to the clathrin light chain family. As to quaternary structure, clathrin coats are formed from molecules containing 3 heavy chains and 3 light chains. Interacts with CALY; the interaction stimulates clathrin self-assembly and clathrin-mediated endocytosis. Interacts with CKAP5 and TACC3 forming the TACC3/ch-TOG/clathrin complex located at spindle inter-microtubules bridges; the complex implicates clathrin triskelions.

The protein localises to the cytoplasmic vesicle membrane. It is found in the membrane. It localises to the coated pit. The protein resides in the cytoplasm. Its subcellular location is the cytoskeleton. The protein localises to the spindle. In terms of biological role, clathrin is the major protein of the polyhedral coat of coated pits and vesicles. Acts as a component of the TACC3/ch-TOG/clathrin complex proposed to contribute to stabilization of kinetochore fibers of the mitotic spindle by acting as inter-microtubule bridge. This is Clathrin light chain A (Clta) from Mus musculus (Mouse).